Reading from the N-terminus, the 91-residue chain is DNA-directed RNA polymerase subunit omega (91 aa).

Belongs to the RNA polymerase subunit omega family. In terms of assembly, the RNAP catalytic core consists of 2 alpha, 1 beta, 1 beta' and 1 omega subunit. When a sigma factor is associated with the core the holoenzyme is formed, which can initiate transcription.

The enzyme catalyses RNA(n) + a ribonucleoside 5'-triphosphate = RNA(n+1) + diphosphate. Functionally, promotes RNA polymerase assembly. Latches the N- and C-terminal regions of the beta' subunit thereby facilitating its interaction with the beta and alpha subunits. The protein is DNA-directed RNA polymerase subunit omega of Edwardsiella ictaluri (strain 93-146).